Reading from the N-terminus, the 499-residue chain is Zinc finger protein PLAG1 (499 aa).

The interval 1-33 (MATVIPGDLSEVRDTQKAPSGKRKRGESKPRKN) is disordered. The tract at residues 2–84 (ATVIPGDLSE…SKYKLQRHMA (83 aa)) is interaction with KPNA2. Positions 22–25 (KRKR) match the Nuclear localization signal motif. C2H2-type zinc fingers lie at residues 34-56 (FPCQLCDKAFNSVEKLKVHSFSH), 62-86 (YKCTHQDCTKAFVSKYKLQRHMATH), 92-114 (HKCNYCEKMFHRKDHLKNHLHTH), 121-143 (FKCEECGKSYNTKLGFKRHLALH), 150-172 (LTCKVCLQNFESTGVLLEHLKSH), 185-207 (HQCEHCERRFYTRKDVRRHMVVH), and 213-236 (FLCQYCAQRFGRKDHLTRHMKKSH). The segment at 41–242 (KAFNSVEKLK…KKSHNQELLK (202 aa)) is decreased nuclear import with localization in the nucleus but also in the cytoplasm. The interval 243 to 383 (VKTEPVDFLD…SPASSSKLGL (141 aa)) is repression domain; contains 3 sumoylation motifs and massively decrease transcription activity. The tract at residues 243 to 499 (VKTEPVDFLD…TLPRFHQAFQ (257 aa)) is activates transcription; Inhibition of nuclear import due to lack of NLS and KPNA2 interaction. Glycyl lysine isopeptide (Lys-Gly) (interchain with G-Cter in SUMO) cross-links involve residues K244 and K263. Over residues 365-379 (GGAPSSSQDSPASSS) the composition is skewed to low complexity. The segment at 365-400 (GGAPSSSQDSPASSSKLGLEPQSGSPDDGAGDLSLS) is disordered. The segment at 384–499 (EPQSGSPDDG…TLPRFHQAFQ (116 aa)) is massively activates transcription.

It belongs to the krueppel C2H2-type zinc-finger protein family. As to quaternary structure, interacts with KPNA2, which escorts protein to the nucleus via interaction with nuclear localization signal. Interacts with E3 SUMO-protein ligase PIAS1, PIAS2 and PIAS4. Post-translationally, sumoylated with SUMO1; which inhibits transcriptional activity, but does not affect nuclear localization. Blockers of sumoylation pathway such as SENP3 and inactive UBE2I increases transcriptional capacity. Sumoylation is increased in the presence of PIAS1. Acetylated by lysine acetyltransferase EP300; which activates transcriptional capacity. Lysine residues that are sumoylated also seem to be target for acetylation. Expressed in heart, spleen, lung, kidney, brain, testis and epididymis but not in salivary glands.

The protein localises to the nucleus. In terms of biological role, transcription factor whose activation results in up-regulation of target genes, such as IGFII, leading to uncontrolled cell proliferation: when overexpressed in cultured cells, higher proliferation rate and transformation are observed. Other target genes such as CRLF1, CRABP2, CRIP2, PIGF are strongly induced in cells with PLAG1 induction. Proto-oncogene whose ectopic expression can trigger the development of pleomorphic adenomas of the salivary gland and lipoblastomas. Cooperates with CBFB-MYH11. The chain is Zinc finger protein PLAG1 (Plag1) from Mus musculus (Mouse).